A 577-amino-acid chain; its full sequence is Beta-fructofuranosidase, insoluble isoenzyme 1 (577 aa).

The first 22 residues, 1 to 22, serve as a signal peptide directing secretion; sequence MGTRLLALAPWLLLLLLQLAGA. The active site involves Asp-63. N-linked (GlcNAc...) asparagine glycans are attached at residues Asn-158, Asn-183, and Asn-333.

It belongs to the glycosyl hydrolase 32 family.

Its subcellular location is the secreted. It localises to the extracellular space. The protein localises to the apoplast. The protein resides in the cell wall. It catalyses the reaction Hydrolysis of terminal non-reducing beta-D-fructofuranoside residues in beta-D-fructofuranosides.. Functionally, may play a role in sucrose partitioning during seed development and in stress response. In Oryza sativa subsp. indica (Rice), this protein is Beta-fructofuranosidase, insoluble isoenzyme 1 (CIN1).